Here is a 323-residue protein sequence, read N- to C-terminus: Cyclin-H (323 aa).

Ser5 is modified (phosphoserine; by CDK8). Phosphoserine is present on Ser132. The interval 297-323 (YEDDDYVSKKSKHEEEEWTDDDLVESL) is disordered. A compositionally biased stretch (basic and acidic residues) spans 302–311 (YVSKKSKHEE). Ser304 is modified (phosphoserine; by CDK8). A compositionally biased stretch (acidic residues) spans 312 to 323 (EEWTDDDLVESL). A Phosphothreonine modification is found at Thr315. A Phosphoserine modification is found at Ser322.

Belongs to the cyclin family. Cyclin C subfamily. Associates primarily with CDK7 and MAT1 to form the CAK complex. CAK can further associate with the core-TFIIH to form the TFIIH basal transcription factor.

The protein localises to the nucleus. Regulates CDK7, the catalytic subunit of the CDK-activating kinase (CAK) enzymatic complex. CAK activates the cyclin-associated kinases CDK1, CDK2, CDK4 and CDK6 by threonine phosphorylation. CAK complexed to the core-TFIIH basal transcription factor activates RNA polymerase II by serine phosphorylation of the repetitive C-terminal domain (CTD) of its large subunit (POLR2A), allowing its escape from the promoter and elongation of the transcripts. Involved in cell cycle control and in RNA transcription by RNA polymerase II. Its expression and activity are constant throughout the cell cycle. The chain is Cyclin-H (CCNH) from Homo sapiens (Human).